We begin with the raw amino-acid sequence, 547 residues long: TBCC domain-containing protein 1 (547 aa).

In terms of domain architecture, C-CAP/cofactor C-like spans 304 to 435 (PHTHRMVVMS…LEDHMAQTGL (132 aa)).

It belongs to the TBCC family.

Its subcellular location is the cytoplasm. The protein resides in the cytoskeleton. It is found in the microtubule organizing center. The protein localises to the centrosome. It localises to the spindle pole. May play a role in the regulation of centrosome and Golgi apparatus positioning. This Xenopus laevis (African clawed frog) protein is TBCC domain-containing protein 1 (tbccd1).